Reading from the N-terminus, the 104-residue chain is Iron-sulfur cluster assembly protein CyaY (104 aa).

The protein belongs to the frataxin family.

Involved in iron-sulfur (Fe-S) cluster assembly. May act as a regulator of Fe-S biogenesis. This Vibrio atlanticus (strain LGP32) (Vibrio splendidus (strain Mel32)) protein is Iron-sulfur cluster assembly protein CyaY.